We begin with the raw amino-acid sequence, 299 residues long: UBX domain-containing protein 1 (299 aa).

Disordered stretches follow at residues 39-61 (AGVP…SGAP), 127-176 (KAKL…NEDE), and 191-218 (EARK…APPK). Residues 46–61 (DAPAQAAPGAADSGAP) are compositionally biased toward low complexity. Residues 111–179 (AKVLEIREKI…REKNEDEIAR (69 aa)) adopt a coiled-coil conformation. Over residues 128–176 (AKLEAEENREKEKKRREDGKAMISHKEAARDREIREAAQDRRREKNEDE) the composition is skewed to basic and acidic residues. Low complexity predominate over residues 201 to 213 (PVPEAKPAPSAAP). The region spanning 218–295 (KDYSTTTLQF…NLVPSANVIL (78 aa)) is the UBX domain.

As to quaternary structure, interacts with cdc-48.1 (via N-terminus) and cdc-48.2 (via N-terminus) in vitro; the interaction with cdc-48.1 is not detected in vivo. Expressed in the germline (at protein level). Expressed in spermatocytes but not in mature sperm (at protein level). Ubiquitously expressed. Predominantly expressed in the spermatheca.

Its subcellular location is the cytoplasm. The protein resides in the perinuclear region. Ubiquitin-binding protein which acts as an adapter for ATPase cdc-48.1 and/or cdc-48.2, conferring substrate specificity. Together with ubxn-2 and ubxn-3, plays a role in hermaphrodite spermatogenesis probably by promoting the degradation of sex determination terminal factor tra-1. The sequence is that of UBX domain-containing protein 1 from Caenorhabditis elegans.